Consider the following 134-residue polypeptide: D-ribose pyranase (134 aa).

The active-site Proton donor is His-20. Substrate contacts are provided by residues Asp-28, His-101, and 123–125; that span reads YSN.

This sequence belongs to the RbsD / FucU family. RbsD subfamily. As to quaternary structure, homodecamer.

The protein localises to the cytoplasm. The enzyme catalyses beta-D-ribopyranose = beta-D-ribofuranose. It functions in the pathway carbohydrate metabolism; D-ribose degradation; D-ribose 5-phosphate from beta-D-ribopyranose: step 1/2. In terms of biological role, catalyzes the interconversion of beta-pyran and beta-furan forms of D-ribose. This Pseudomonas entomophila (strain L48) protein is D-ribose pyranase.